The chain runs to 110 residues: UPF0145 protein (110 aa).

Belongs to the UPF0145 family.

The chain is UPF0145 protein from Listeria ivanovii.